The sequence spans 309 residues: Olfactory receptor 10J5 (309 aa).

Residues 1-25 (MKRKNFTEVSEFIFLGFSSFGKHQI) lie on the Extracellular side of the membrane. N-linked (GlcNAc...) asparagine glycosylation is present at Asn5. The chain crosses the membrane as a helical span at residues 26-46 (TLFVVFLTVYILTLVANIIIV). Over 47–54 (TIICIDHH) the chain is Cytoplasmic. A helical membrane pass occupies residues 55-75 (LHTPMYFFLSMLASSETVYTL). The Extracellular portion of the chain corresponds to 76–99 (VIVPRMLLSLIFHNQPISLAGCAT). The cysteines at positions 97 and 188 are disulfide-linked. A helical membrane pass occupies residues 100–120 (QMFFFVILATNNCFLLTAMGY). Residues 121–139 (DRYVAICRPLRYTVIMSKG) lie on the Cytoplasmic side of the membrane. A helical transmembrane segment spans residues 140–160 (LCAQLVCGSFGIGLTMAVLHV). Residues 161 to 196 (TAMFNLPFCGTVVDHFFCDIYPVMKLSCIDTTINEI) are Extracellular-facing. Residues 197-216 (INYGVSSFVIFVPIGLIFIS) form a helical membrane-spanning segment. Residues 217–236 (YVLVISSILQIASAEGRKKT) lie on the Cytoplasmic side of the membrane. A helical membrane pass occupies residues 237–257 (FATCVSHLTVVIVHCGCASIA). Over 258–270 (YLKPKSESSIEKD) the chain is Extracellular. The chain crosses the membrane as a helical span at residues 271–291 (LVLSVTYTIITPLLNPVVYSL). Over 292–309 (RNKEVKDALCRVVGRNIS) the chain is Cytoplasmic.

This sequence belongs to the G-protein coupled receptor 1 family. In terms of tissue distribution, expressed in both the aorta, the coronary artery and umbilical vein endothelial cells (HUVECs) (at protein level).

It is found in the cell membrane. In terms of biological role, olfactory receptor. Activated by the synthetic floral odorant, lyral, and by alpha-cedrene, a sesquiterpene constituent of cedarwood oil. Its activation increases intracellular Ca(2+). Acts as a key regulator of myogenesis through its actions on cell migration and adhesion by activating the Ca(2+)-dependent AKT signal transduction pathway. Also acts as a regulator of angiogenesis. Moreover, plays a role in the regulation of lipid accumulation in hepatocytes via the cAMP-PKA pathway. May be involved in sperm chemotaxis and motility. The protein is Olfactory receptor 10J5 of Homo sapiens (Human).